The chain runs to 316 residues: Probable 5-dehydro-4-deoxyglucarate dehydratase (316 aa).

This sequence belongs to the DapA family.

The catalysed reaction is 5-dehydro-4-deoxy-D-glucarate + H(+) = 2,5-dioxopentanoate + CO2 + H2O. It functions in the pathway carbohydrate acid metabolism; D-glucarate degradation; 2,5-dioxopentanoate from D-glucarate: step 2/2. The protein is Probable 5-dehydro-4-deoxyglucarate dehydratase of Corynebacterium glutamicum (strain R).